The primary structure comprises 74 residues: Sec-independent protein translocase protein TatA (74 aa).

Residues 1–21 (MGSIGMTELLLIFGIIVLLFG) form a helical membrane-spanning segment.

It belongs to the TatA/E family. Forms a complex with TatC.

The protein resides in the cell inner membrane. Functionally, part of the twin-arginine translocation (Tat) system that transports large folded proteins containing a characteristic twin-arginine motif in their signal peptide across membranes. TatA could form the protein-conducting channel of the Tat system. The chain is Sec-independent protein translocase protein TatA from Sulfurihydrogenibium sp. (strain YO3AOP1).